Reading from the N-terminus, the 246-residue chain is Putative S-adenosyl-L-methionine-dependent methyltransferase Mflv_0168 (246 aa).

S-adenosyl-L-methionine contacts are provided by residues D112 and 141-142 (DL).

This sequence belongs to the UPF0677 family.

Exhibits S-adenosyl-L-methionine-dependent methyltransferase activity. The polypeptide is Putative S-adenosyl-L-methionine-dependent methyltransferase Mflv_0168 (Mycolicibacterium gilvum (strain PYR-GCK) (Mycobacterium gilvum (strain PYR-GCK))).